Reading from the N-terminus, the 39-residue chain is Omega-theraphotoxin-Asp1a (39 aa).

Cystine bridges form between cysteine 4–cysteine 25, cysteine 8–cysteine 31, and cysteine 17–cysteine 36.

Expressed by the venom gland.

The protein resides in the secreted. In terms of biological role, toxin that inhibits voltage-gated calcium channels in rat cerebellar granule cells (IC(50)&lt;200 nM). Is lethal to cockroaches. The sequence is that of Omega-theraphotoxin-Asp1a from Aphonopelma sp. (American tarantula).